A 336-amino-acid polypeptide reads, in one-letter code: DNA repair protein RAD51 homolog A (336 aa).

In terms of domain architecture, HhH spans T45–E74. G124 to T131 is a binding site for ATP. Positions L242–G257 match the Nuclear export signal motif.

It belongs to the RecA family. RAD51 subfamily. As to quaternary structure, forms linear homooligomers, giving rise to a RAD51 nucleoprotein filament, which is essential for strand-pairing reactions during DNA recombination.

Its subcellular location is the nucleus. It localises to the cytoplasm. It is found in the chromosome. In terms of biological role, plays an important role in homologous strand exchange, a key step in DNA repair through homologous recombination (HR). Binds to single-stranded DNA in an ATP-dependent manner to form nucleoprotein filaments which are essential for the homology search and strand exchange. Catalyzes the recognition of homology and strand exchange between homologous DNA partners to form a joint molecule between a processed DNA break and the repair template. Recruited to resolve stalled replication forks during replication stress. Also involved in interstrand cross-link repair. This chain is DNA repair protein RAD51 homolog A (rad51-a), found in Xenopus laevis (African clawed frog).